A 474-amino-acid chain; its full sequence is Crocetin glucosyltransferase, chloroplastic (474 aa).

A chloroplast-targeting transit peptide spans 1–45 (MVQQRHVLLITYPAQGHINPALQFAQRLLRMGIQVTLATSVYALS). His17 (proton acceptor) is an active-site residue. Position 17 (His17) interacts with an anthocyanidin. Residues Gln346, His361, Trp364, Asn365, Ser366, Glu369, Asp385, and Gln386 each coordinate UDP-alpha-D-glucose.

Belongs to the UDP-glycosyltransferase family. As to expression, ubiquitous.

The protein resides in the plastid. It is found in the chloroplast. It carries out the reaction crocetin + UDP-alpha-D-glucose = beta-D-glucosyl crocetin + UDP. The catalysed reaction is beta-D-glucosyl crocetin + UDP-alpha-D-glucose = bis(beta-D-glucosyl) crocetin + UDP. It catalyses the reaction beta-D-gentiobiosyl crocetin + UDP-alpha-D-glucose = beta-D-gentiobiosyl beta-D-glucosyl crocetin + UDP. In terms of biological role, glucosyltransferase acting on a broad range of substrates, including crocetin, 4-coumaric acid, caffeic acid and ferulic acid. No activity with indol-3-acetic acid, bixin and norbixin, and no formation of O-glucosides. Involved with UGT94E5 in sequential glycosylation of crocetin to crocin (bis(beta-D-gentiobiosyl) crocetin). In Gardenia jasminoides (Cape jasmine), this protein is Crocetin glucosyltransferase, chloroplastic (UGT75L6).